Consider the following 218-residue polypeptide: uncharacterized protein (218 aa).

The region spanning 2 to 216 (IEVLNLTKKI…ETSEKVIYKK (215 aa)) is the ABC transporter domain. 34-41 (GSNGSGKT) is an ATP binding site.

It belongs to the ABC transporter superfamily.

This is an uncharacterized protein from Bacillus subtilis (strain 168).